A 638-amino-acid chain; its full sequence is Meiosis initiator protein (638 aa).

Disordered stretches follow at residues 1–21 (MFGS…SLGP), 60–79 (NQRN…KNHT), 138–249 (LAGL…KGGQ), 404–433 (PSAY…SLHR), and 447–537 (GNSK…PCPP). A compositionally biased stretch (polar residues) spans 7–20 (YLGSSEQPRANSLG). The segment at 62–75 (RNQNKLLSPNKKQR) is basic motif; degenerate. A bHLH domain is found at 62–116 (RNQNKLLSPNKKQRKNHTSKLQELALLLPIALKTGTKKLTKKEILVHVLQYIQYL). Positions 76–116 (KNHTSKLQELALLLPIALKTGTKKLTKKEILVHVLQYIQYL) are helix-loop-helix motif. Residues 157 to 167 (TPSSSPSSQKS) show a composition bias toward low complexity. The segment covering 182–191 (TQASESQTRT) has biased composition (polar residues). Residues 412 to 430 (PQEKDTASKAPKDPPESHS) are compositionally biased toward basic and acidic residues. A compositionally biased stretch (low complexity) spans 453 to 465 (SSSSSSSSSSSSS). The span at 528 to 537 (KEKKKGPCPP) shows a compositional bias: basic residues. A DNA-binding region (HMG box) is located at residues 540 to 608 (KKKCVNGFIM…QHNRIVKQDG (69 aa)).

In terms of assembly, interacts with STRA8.

The protein resides in the nucleus. Functionally, gatekeeper of meiotic initiation in both male and female germ cells. In complex with STRA8, directly activates the transcription of a subset of critical meiotic genes playing a central role in cell-cycle switching from mitosis to meiosis. Temporal expression of MEIOSIN is required for meiotic entry decision. The chain is Meiosis initiator protein from Homo sapiens (Human).